A 146-amino-acid chain; its full sequence is Prefoldin subunit alpha 1 (146 aa).

Belongs to the prefoldin subunit alpha family. In terms of assembly, heterohexamer of two alpha and four beta subunits.

It localises to the cytoplasm. Its function is as follows. Molecular chaperone capable of stabilizing a range of proteins. Seems to fulfill an ATP-independent, HSP70-like function in archaeal de novo protein folding. The sequence is that of Prefoldin subunit alpha 1 from Thermococcus kodakarensis (strain ATCC BAA-918 / JCM 12380 / KOD1) (Pyrococcus kodakaraensis (strain KOD1)).